We begin with the raw amino-acid sequence, 447 residues long: Serine/threonine-protein phosphatase 2A 55 kDa regulatory subunit B alpha isoform (447 aa).

Ala2 carries the post-translational modification N-acetylalanine. WD repeat units follow at residues 11-80 (QWCF…FQSH), 94-174 (EKIN…IFAN), 175-218 (AHTY…VDIK), 227-270 (EVIT…KLFE), 288-325 (ISDV…TYQV), 347-381 (ECCW…TLEA), and 414-446 (DFNK…QDKV).

Belongs to the phosphatase 2A regulatory subunit B family. As to quaternary structure, PP2A consists of a common heterodimeric core enzyme, composed of a 36 kDa catalytic subunit (subunit C) and a 65 kDa constant regulatory subunit (PR65 or subunit A), that associates with a variety of regulatory subunits. Proteins that associate with the core dimer include three families of regulatory subunits B (the R2/B/PR55/B55, R3/B''/PR72/PR130/PR59 and R5/B'/B56 families), the 48 kDa variable regulatory subunit, viral proteins, and cell signaling molecules. Interacts with the PP2A C catalytic subunit PPP2CA. Interacts with the PP2A A subunit PPP2R1A. Interacts with TP53. Interacts with IER5. Interacts with MFHAS1; the interaction is direct. Interacts with PABIR1/FAM122A (via its N-terminus); the interaction is direct and inhibits PP2A activity. Interacts with ARPP19; the interaction is direct and inhibits PP2A activity. Interacts with CRTC3. Expressed in all tissues examined.

In terms of biological role, substrate-recognition subunit of protein phosphatase 2A (PP2A) that plays a key role in cell cycle by controlling mitosis entry and exit. Involved in chromosome clustering during late mitosis by mediating dephosphorylation of MKI67. Essential for serine/threonine-protein phosphatase 2A-mediated dephosphorylation of WEE1, preventing its ubiquitin-mediated proteolysis, increasing WEE1 protein levels, and promoting the G2/M checkpoint. The protein is Serine/threonine-protein phosphatase 2A 55 kDa regulatory subunit B alpha isoform (PPP2R2A) of Homo sapiens (Human).